The primary structure comprises 821 residues: LPS-assembly protein LptD (821 aa).

An N-terminal signal peptide occupies residues 1–20 (MGKRLFWTALSGLMVSAAHA).

The protein belongs to the LptD family. In terms of assembly, component of the lipopolysaccharide transport and assembly complex. Interacts with LptE and LptA.

It localises to the cell outer membrane. Together with LptE, is involved in the assembly of lipopolysaccharide (LPS) at the surface of the outer membrane. This chain is LPS-assembly protein LptD, found in Chromohalobacter salexigens (strain ATCC BAA-138 / DSM 3043 / CIP 106854 / NCIMB 13768 / 1H11).